The sequence spans 196 residues: dTDP-4-dehydro-6-deoxyglucose 3-epimerase (196 aa).

Substrate contacts are provided by residues R21, E26, 45-47, and R57; that span reads QVN. H60 (proton acceptor) is an active-site residue. Substrate-binding residues include K70 and R117. Y130 acts as the Proton donor in catalysis. E141 and R166 together coordinate substrate.

This sequence belongs to the dTDP-4-dehydrorhamnose 3,5-epimerase family. In terms of assembly, homodimer.

The enzyme catalyses dTDP-4-dehydro-6-deoxy-alpha-D-glucose = dTDP-4-dehydro-6-deoxy-alpha-D-allose. The protein operates within antibiotic biosynthesis. Functionally, involved in the biosynthesis of dTDP-6-deoxy-D-allose, an intermediate in the biosynthesis of mycinose, which is one of the two unusual sugars attached to the 16-membered macrolactone ring of the aglycone antibiotic chalcomycin. Catalyzes the conversion of dTDP-4-oxo-6-deoxyglucose to dTDP-4-oxo-6-deoxyallose, via a C-3 epimerization. The chain is dTDP-4-dehydro-6-deoxyglucose 3-epimerase from Streptomyces bikiniensis.